We begin with the raw amino-acid sequence, 365 residues long: 1-aminocyclopropane-1-carboxylate oxidase homolog 1 (365 aa).

Residues 212–313 (CTNSLLLLGH…RISVACFFSS (102 aa)) form the Fe2OG dioxygenase domain. Positions 238, 240, and 294 each coordinate Fe cation.

It belongs to the iron/ascorbate-dependent oxidoreductase family. Requires Fe cation as cofactor.

The protein is 1-aminocyclopropane-1-carboxylate oxidase homolog 1 of Arabidopsis thaliana (Mouse-ear cress).